A 469-amino-acid polypeptide reads, in one-letter code: Uronate isomerase (469 aa).

This sequence belongs to the metallo-dependent hydrolases superfamily. Uronate isomerase family.

It catalyses the reaction D-glucuronate = D-fructuronate. The enzyme catalyses aldehydo-D-galacturonate = keto-D-tagaturonate. Its pathway is carbohydrate metabolism; pentose and glucuronate interconversion. This is Uronate isomerase from Corynebacterium efficiens (strain DSM 44549 / YS-314 / AJ 12310 / JCM 11189 / NBRC 100395).